A 406-amino-acid chain; its full sequence is O-succinylhomoserine sulfhydrylase (406 aa).

The residue at position 219 (lysine 219) is an N6-(pyridoxal phosphate)lysine.

Belongs to the trans-sulfuration enzymes family. MetZ subfamily. In terms of assembly, homotetramer. Pyridoxal 5'-phosphate is required as a cofactor.

It catalyses the reaction O-succinyl-L-homoserine + hydrogen sulfide = L-homocysteine + succinate. It functions in the pathway amino-acid biosynthesis; L-methionine biosynthesis via de novo pathway; L-homocysteine from O-succinyl-L-homoserine: step 1/1. In terms of biological role, catalyzes the formation of L-homocysteine from O-succinyl-L-homoserine (OSHS) and hydrogen sulfide. This chain is O-succinylhomoserine sulfhydrylase, found in Mycobacterium tuberculosis (strain CDC 1551 / Oshkosh).